Reading from the N-terminus, the 316-residue chain is Methionyl-tRNA formyltransferase (316 aa).

110-113 serves as a coordination point for (6S)-5,6,7,8-tetrahydrofolate; it reads SLLP.

It belongs to the Fmt family.

It catalyses the reaction L-methionyl-tRNA(fMet) + (6R)-10-formyltetrahydrofolate = N-formyl-L-methionyl-tRNA(fMet) + (6S)-5,6,7,8-tetrahydrofolate + H(+). Attaches a formyl group to the free amino group of methionyl-tRNA(fMet). The formyl group appears to play a dual role in the initiator identity of N-formylmethionyl-tRNA by promoting its recognition by IF2 and preventing the misappropriation of this tRNA by the elongation apparatus. The polypeptide is Methionyl-tRNA formyltransferase (Halothermothrix orenii (strain H 168 / OCM 544 / DSM 9562)).